We begin with the raw amino-acid sequence, 739 residues long: tRNA 5-methylaminomethyl-2-thiouridine biosynthesis bifunctional protein MnmC (739 aa).

A tRNA (mnm(5)s(2)U34)-methyltransferase region spans residues methionine 1–leucine 282. Residues isoleucine 330–serine 739 form an FAD-dependent cmnm(5)s(2)U34 oxidoreductase region.

This sequence in the N-terminal section; belongs to the methyltransferase superfamily. tRNA (mnm(5)s(2)U34)-methyltransferase family. It in the C-terminal section; belongs to the DAO family. It depends on FAD as a cofactor.

Its subcellular location is the cytoplasm. It catalyses the reaction 5-aminomethyl-2-thiouridine(34) in tRNA + S-adenosyl-L-methionine = 5-methylaminomethyl-2-thiouridine(34) in tRNA + S-adenosyl-L-homocysteine + H(+). Functionally, catalyzes the last two steps in the biosynthesis of 5-methylaminomethyl-2-thiouridine (mnm(5)s(2)U) at the wobble position (U34) in tRNA. Catalyzes the FAD-dependent demodification of cmnm(5)s(2)U34 to nm(5)s(2)U34, followed by the transfer of a methyl group from S-adenosyl-L-methionine to nm(5)s(2)U34, to form mnm(5)s(2)U34. This Psychrobacter sp. (strain PRwf-1) protein is tRNA 5-methylaminomethyl-2-thiouridine biosynthesis bifunctional protein MnmC.